The primary structure comprises 258 residues: Thyroxine 5-deiodinase (258 aa).

A helical; Signal-anchor for type II membrane protein membrane pass occupies residues 1–20 (AACILLFPRFLLTAVMLWLL). The Extracellular portion of the chain corresponds to 21 to 258 (DFLCIRKKML…QSPGAVVIQV (238 aa)). The active site involves selenocysteine 122. A non-standard amino acid (selenocysteine) is located at residue selenocysteine 122.

Belongs to the iodothyronine deiodinase family. As to quaternary structure, monomer. Homodimer. May undergo minor heretodimerization with DIO1 and DIO2.

The protein localises to the cell membrane. The protein resides in the endosome membrane. It carries out the reaction 3,3',5'-triiodo-L-thyronine + iodide + A + H(+) = L-thyroxine + AH2. It catalyses the reaction 3,3'-diiodo-L-thyronine + iodide + A + H(+) = 3,3',5-triiodo-L-thyronine + AH2. The catalysed reaction is 3-iodo-L-thyronine + iodide + A + H(+) = 3,5-diiodo-L-thyronine + AH2. The enzyme catalyses L-thyronine + iodide + A + H(+) = 3-iodo-L-thyronine + AH2. It carries out the reaction 3',5'-diiodo-L-thyronine + iodide + A + H(+) = 3,3',5'-triiodo-L-thyronine + AH2. It catalyses the reaction 3'-iodo-L-thyronine + iodide + A + H(+) = 3,3'-diiodo-L-thyronine + AH2. The catalysed reaction is 3,3',5'-triiodothyronamine + iodide + A + H(+) = 3,3',5,5'-tetraiodothyronamine + AH2. The enzyme catalyses 3',5'-diiodothyronamine + iodide + A + H(+) = 3,3',5'-triiodothyronamine + AH2. It carries out the reaction 3,3'-diiodothyronamine + iodide + A + H(+) = 3,3',5-triiodothyronamine + AH2. It catalyses the reaction 3-iodothyronamine + iodide + A + H(+) = 3,5-diiodothyronamine + AH2. The catalysed reaction is 3'-iodothyronamine + iodide + A + H(+) = 3,3'-diiodothyronamine + AH2. The enzyme catalyses thyronamine + iodide + A + H(+) = 3-iodothyronamine + AH2. Its function is as follows. Plays a crucial role in the metabolism of thyroid hormones (TH) and has specific roles in TH activation and inactivation by deiodination. Catalyzes the deiodination of L-thyroxine (T4) to 3,3',5'-triiodothyronine (rT3) and 3,5,3'-triiodothyronine (T3) to 3,3'-diiodothyronine (3,3'-T2) via inner-ring deiodination (IRD). Catalyzes the deiodination of rT3 to 3',5'-diiodothyronine (3',5'-T2), 3,3'-T2 to 3'-monoiodothyronine (3'-T1) and 3,5-diiodothyronine (3,5-T2) to 3-monoiodothyronine (3-T1) via IRD. Catalyzes the deiodination of 3-T1 to L-thyronine (T0) via outer-ring deiodination (ORD). Catalyzes the tyrosyl ring deiodinations of 3,3',5,5'-tetraiodothyronamine, 3,3',5'-triiodothyronamine, 3,5,3'-triiodothyronamine, 3,5-diiodothyronamine, 3,3'-diiodothyronamine and 3-iodothyronamine. This chain is Thyroxine 5-deiodinase (DIO3), found in Gallus gallus (Chicken).